A 203-amino-acid chain; its full sequence is A-type ATP synthase subunit E (203 aa).

This sequence belongs to the V-ATPase E subunit family. Has multiple subunits with at least A(3), B(3), C, D, E, F, H, I and proteolipid K(x).

Its subcellular location is the cell membrane. In terms of biological role, component of the A-type ATP synthase that produces ATP from ADP in the presence of a proton gradient across the membrane. In Thermococcus onnurineus (strain NA1), this protein is A-type ATP synthase subunit E.